Here is a 257-residue protein sequence, read N- to C-terminus: Hydroxyacylglutathione hydrolase (257 aa).

Zn(2+) contacts are provided by H54, H56, D58, H59, H113, D137, and H175.

It belongs to the metallo-beta-lactamase superfamily. Glyoxalase II family. In terms of assembly, monomer. The cofactor is Zn(2+).

The enzyme catalyses an S-(2-hydroxyacyl)glutathione + H2O = a 2-hydroxy carboxylate + glutathione + H(+). It functions in the pathway secondary metabolite metabolism; methylglyoxal degradation; (R)-lactate from methylglyoxal: step 2/2. Thiolesterase that catalyzes the hydrolysis of S-D-lactoyl-glutathione to form glutathione and D-lactic acid. This Gloeothece citriformis (strain PCC 7424) (Cyanothece sp. (strain PCC 7424)) protein is Hydroxyacylglutathione hydrolase.